The following is a 258-amino-acid chain: Small ribosomal subunit protein mS40 (258 aa).

The transit peptide at 1 to 35 (MAASVLNTLLRRLPMLSLFRGAHRVQVPLQTLCTK) directs the protein to the mitochondrion. Phosphoserine is present on residues S38 and S49. Positions 218–258 (RLYQGHLREESGPPPESMPKMPPTAPAEASFTGQTDPQSAL) are disordered. Residues 229–242 (GPPPESMPKMPPTA) show a composition bias toward pro residues. Residues 248 to 258 (FTGQTDPQSAL) are compositionally biased toward polar residues.

This sequence belongs to the bacterial ribosomal protein bS18 family. Mitochondrion-specific ribosomal protein mS40 subfamily. Component of the mitochondrial ribosome small subunit (28S) which comprises a 12S rRNA and about 30 distinct proteins.

Its subcellular location is the mitochondrion. In Macaca mulatta (Rhesus macaque), this protein is Small ribosomal subunit protein mS40 (MRPS18B).